The chain runs to 241 residues: Fatty acid metabolism regulator protein (241 aa).

The region spanning 6 to 74 (KGPASFAEKY…HGKPTRVNNF (69 aa)) is the HTH gntR-type domain. The segment at residues 34 to 53 (ERELSELIGVTRTTLREVLQ) is a DNA-binding region (H-T-H motif).

Homodimer.

Its subcellular location is the cytoplasm. Functionally, multifunctional regulator of fatty acid metabolism. This is Fatty acid metabolism regulator protein from Shewanella sp. (strain ANA-3).